The following is a 269-amino-acid chain: Fructose permease IIC component (269 aa).

The PTS EIIC type-4 domain occupies 1 to 234; that stretch reads MSSLQIILLL…GALGLCLALL (234 aa). Transmembrane regions (helical) follow at residues 2–22, 35–54, 64–86, 90–110, 149–169, 181–201, and 206–226; these read SSLQ…ASVL, TLVG…GGTL, VGLA…VITA, IGEG…LTIF, VMIP…AFLG, IGGG…MNIP, and FFYI…GFGA.

The protein localises to the cell membrane. Functionally, the phosphoenolpyruvate-dependent sugar phosphotransferase system (PTS), a major carbohydrate active -transport system, catalyzes the phosphorylation of incoming sugar substrates concomitant with their translocation across the cell membrane. This system is involved in fructose transport. The protein is Fructose permease IIC component (levF) of Bacillus subtilis (strain 168).